The primary structure comprises 224 residues: DNA repair and recombination protein RadB (224 aa).

The protein belongs to the eukaryotic RecA-like protein family. RadB subfamily.

Functionally, involved in DNA repair and in homologous recombination. May regulate the cleavage reactions of the branch-structured DNA. Has a very weak ATPase activity that is not stimulated by DNA. Binds DNA but does not promote DNA strands exchange. The chain is DNA repair and recombination protein RadB from Thermococcus onnurineus (strain NA1).